The following is a 365-amino-acid chain: Histidinol-phosphate aminotransferase 2 (365 aa).

Lysine 226 carries the post-translational modification N6-(pyridoxal phosphate)lysine.

Belongs to the class-II pyridoxal-phosphate-dependent aminotransferase family. Histidinol-phosphate aminotransferase subfamily. In terms of assembly, homodimer. Pyridoxal 5'-phosphate is required as a cofactor.

It catalyses the reaction L-histidinol phosphate + 2-oxoglutarate = 3-(imidazol-4-yl)-2-oxopropyl phosphate + L-glutamate. The protein operates within amino-acid biosynthesis; L-histidine biosynthesis; L-histidine from 5-phospho-alpha-D-ribose 1-diphosphate: step 7/9. The polypeptide is Histidinol-phosphate aminotransferase 2 (hisC2) (Pasteurella multocida (strain Pm70)).